The primary structure comprises 325 residues: Elongation factor P--(R)-beta-lysine ligase (325 aa).

76 to 78 (SPE) is a binding site for substrate. ATP is bound by residues 100 to 102 (RNE) and asparagine 109. Tyrosine 118 serves as a coordination point for substrate. An ATP-binding site is contributed by 244-245 (EL). Glutamate 251 lines the substrate pocket. Glycine 300 provides a ligand contact to ATP.

It belongs to the class-II aminoacyl-tRNA synthetase family. EpmA subfamily. In terms of assembly, homodimer.

The catalysed reaction is D-beta-lysine + L-lysyl-[protein] + ATP = N(6)-((3R)-3,6-diaminohexanoyl)-L-lysyl-[protein] + AMP + diphosphate + H(+). With EpmB is involved in the beta-lysylation step of the post-translational modification of translation elongation factor P (EF-P). Catalyzes the ATP-dependent activation of (R)-beta-lysine produced by EpmB, forming a lysyl-adenylate, from which the beta-lysyl moiety is then transferred to the epsilon-amino group of a conserved specific lysine residue in EF-P. The protein is Elongation factor P--(R)-beta-lysine ligase of Klebsiella pneumoniae subsp. pneumoniae (strain ATCC 700721 / MGH 78578).